Consider the following 916-residue polypeptide: Oxysterol-binding protein 2 (916 aa).

3 disordered regions span residues 1–20 (MGKA…SRGL), 34–121 (TAAP…PFTK), and 139–163 (PESG…TPLG). Over residues 49–58 (EPKPQPQPVP) the composition is skewed to pro residues. Over residues 79–92 (RSEPVSETTSEPEP) the composition is skewed to low complexity. Over residues 99–113 (ELLQGSRPGSESSSG) the composition is skewed to polar residues. Low complexity predominate over residues 144-155 (LPALKPLPLLRP). Positions 182–274 (LDSFEGWLLK…WITALELAKA (93 aa)) constitute a PH domain. Disordered regions lie at residues 282 to 301 (THSD…DKSE) and 417 to 448 (FHSA…EEDE). Phosphoserine is present on Ser287. A Phosphoserine modification is found at Ser763. The segment at 813–842 (EGVAPTDSRLRPDQRLMEKGRWDEANTEKQ) is disordered.

The protein belongs to the OSBP family. As to quaternary structure, interacts with CCDC159. As to expression, expressed mainly in retina, testis, and fetal liver.

The protein localises to the membrane. It is found in the cytoplasmic vesicle. The protein resides in the secretory vesicle. It localises to the acrosome. Its function is as follows. Binds 7-ketocholesterol. Acts during spermatid development where its function is required prior to the removal of cytoplasm from the sperm head. The sequence is that of Oxysterol-binding protein 2 (OSBP2) from Homo sapiens (Human).